We begin with the raw amino-acid sequence, 264 residues long: Methylthioribulose-1-phosphate dehydratase (264 aa).

Cys-110 provides a ligand contact to substrate. Zn(2+) contacts are provided by His-128 and His-130. Glu-151 serves as the catalytic Proton donor/acceptor. His-213 serves as a coordination point for Zn(2+).

This sequence belongs to the aldolase class II family. MtnB subfamily. Zn(2+) is required as a cofactor.

The protein localises to the cytoplasm. The enzyme catalyses 5-(methylsulfanyl)-D-ribulose 1-phosphate = 5-methylsulfanyl-2,3-dioxopentyl phosphate + H2O. It functions in the pathway amino-acid biosynthesis; L-methionine biosynthesis via salvage pathway; L-methionine from S-methyl-5-thio-alpha-D-ribose 1-phosphate: step 2/6. Catalyzes the dehydration of methylthioribulose-1-phosphate (MTRu-1-P) into 2,3-diketo-5-methylthiopentyl-1-phosphate (DK-MTP-1-P). The chain is Methylthioribulose-1-phosphate dehydratase from Vanderwaltozyma polyspora (strain ATCC 22028 / DSM 70294 / BCRC 21397 / CBS 2163 / NBRC 10782 / NRRL Y-8283 / UCD 57-17) (Kluyveromyces polysporus).